Reading from the N-terminus, the 169-residue chain is Cell division inhibitor SulA (169 aa).

Residues 1-15 are compositionally biased toward polar residues; the sequence is MFTSAHANRSAQASA. The segment at 1 to 22 is disordered; sequence MFTSAHANRSAQASASAGHYAH. The ftsZ binding stretch occupies residues 106–112; the sequence is ALRTGNY. Residues 162–169 are lon protease binding; it reads KIHSNLYH.

This sequence belongs to the SulA family. As to quaternary structure, interacts with FtsZ. Post-translationally, is rapidly cleaved and degraded by the Lon protease once DNA damage is repaired.

Functionally, component of the SOS system and an inhibitor of cell division. Accumulation of SulA causes rapid cessation of cell division and the appearance of long, non-septate filaments. In the presence of GTP, binds a polymerization-competent form of FtsZ in a 1:1 ratio, thus inhibiting FtsZ polymerization and therefore preventing it from participating in the assembly of the Z ring. This mechanism prevents the premature segregation of damaged DNA to daughter cells during cell division. The polypeptide is Cell division inhibitor SulA (Klebsiella pneumoniae (strain 342)).